Here is a 265-residue protein sequence, read N- to C-terminus: Probable autolysin SsaALP (265 aa).

The N-terminal stretch at 1–25 (MKKLAFAITATSGAAAFLTHHDAQA) is a signal peptide. 2 consecutive LysM domains span residues 27 to 70 (TQHT…VISV) and 89 to 132 (SSHT…TLQI). The disordered stretch occupies residues 72-92 (GSDAQNTSNTSPQAGSASSHT). The segment covering 74–92 (DAQNTSNTSPQAGSASSHT) has biased composition (polar residues). A Peptidase C51 domain is found at 141–265 (TPTATTGSNG…SEVSSYAFIH (125 aa)).

The catalysed reaction is Hydrolyzes the link between N-acetylmuramoyl residues and L-amino acid residues in certain cell-wall glycopeptides.. In terms of biological role, has weak lytic activity toward S.aureus cells. This Staphylococcus aureus (strain NCTC 8325 / PS 47) protein is Probable autolysin SsaALP.